A 121-amino-acid polypeptide reads, in one-letter code: Small ribosomal subunit protein uS13 (121 aa).

The interval 94-121 is disordered; that stretch reads GLPVRGQNTKNNARTRKGPRRTVANKKK. The span at 106 to 121 shows a compositional bias: basic residues; the sequence is ARTRKGPRRTVANKKK.

Belongs to the universal ribosomal protein uS13 family. In terms of assembly, part of the 30S ribosomal subunit. Forms a loose heterodimer with protein S19. Forms two bridges to the 50S subunit in the 70S ribosome.

Located at the top of the head of the 30S subunit, it contacts several helices of the 16S rRNA. In the 70S ribosome it contacts the 23S rRNA (bridge B1a) and protein L5 of the 50S subunit (bridge B1b), connecting the 2 subunits; these bridges are implicated in subunit movement. Contacts the tRNAs in the A and P-sites. This chain is Small ribosomal subunit protein uS13, found in Geobacillus kaustophilus (strain HTA426).